A 152-amino-acid polypeptide reads, in one-letter code: Small ribosomal subunit protein uS5 (152 aa).

An S5 DRBM domain is found at 14–77; it reads FEEVIVNIGR…DDAHKNLVKV (64 aa).

The protein belongs to the universal ribosomal protein uS5 family. In terms of assembly, part of the 30S ribosomal subunit. Contacts proteins S4 and S8.

Its function is as follows. With S4 and S12 plays an important role in translational accuracy. Functionally, located at the back of the 30S subunit body where it stabilizes the conformation of the head with respect to the body. This is Small ribosomal subunit protein uS5 from Sulfurovum sp. (strain NBC37-1).